The chain runs to 547 residues: Smu-2 suppressor of mec-8 and unc-52 protein (547 aa).

Disordered regions lie at residues Thr18–Gln125, Ile164–Leu202, Ala288–Lys459, Asn496–Leu515, and Lys524–Tyr547. Residues Ala34–Ala44 are compositionally biased toward basic and acidic residues. Basic residues predominate over residues Ser45 to Lys58. A coiled-coil region spans residues Lys66 to Glu94. Residues Asn87–Ser106 show a composition bias toward basic and acidic residues. The required and sufficient for interaction with smu-1 stretch occupies residues Glu163 to Glu223. Residues Lys166 to Ala178 show a composition bias toward acidic residues. Low complexity-rich tracts occupy residues Ser185 to Ser196 and Ala307 to Ala317. Residues Val330–Glu423 show a composition bias toward basic and acidic residues. A run of 12 repeats spans residues Arg336 to Asp337, Arg339 to Asp340, Arg348 to Asp349, Arg350 to Ser351, Arg352 to Asp353, Arg354 to Ser355, Arg356 to Asp357, Arg358 to Asp359, Arg360 to Asp361, Arg362 to Asp363, Arg364 to Asp365, and Arg367 to Asp368. The 12 X 2 AA repeats of R-[DS] stretch occupies residues Arg336 to Asp368. The stretch at Phe371–Gly427 forms a coiled coil.

The protein belongs to the RED family. Probable component of the spliceosome. Heterotetramer with smu-1. The smu-1 homodimer interacts (via the N-terminal region including the LisH and CTLH domains) with smu-2, giving rise to a heterotetramer. In terms of tissue distribution, ubiquitous.

The protein localises to the nucleus. In terms of biological role, auxiliary spliceosomal protein that regulates selection of alternative splice sites in a small set of target pre-mRNA species. Selectively regulates alternative splicing of unc-52 exon 17. Thus, smu-2 mutants selectively suppress the effects of unc-52 nonsense mutations in exon 17 by promoting the accumulation of unc-52 isoforms that lack exon 17. In contrast, smu-2 mutants do not suppress the effects of an unc-52 mutation that affects the 5' splice site of exon 16. Required for normal accumulation of smu-1. This is Smu-2 suppressor of mec-8 and unc-52 protein from Caenorhabditis elegans.